Reading from the N-terminus, the 114-residue chain is Small ribosomal subunit protein bS6 (114 aa).

It belongs to the bacterial ribosomal protein bS6 family.

Its function is as follows. Binds together with bS18 to 16S ribosomal RNA. This Bacteroides thetaiotaomicron (strain ATCC 29148 / DSM 2079 / JCM 5827 / CCUG 10774 / NCTC 10582 / VPI-5482 / E50) protein is Small ribosomal subunit protein bS6.